The chain runs to 143 residues: Hemoglobin subunit alpha (143 aa).

One can recognise a Globin domain in the interval 2-143; sequence RFSQDDEVLI…IVHVLISLYR (142 aa). Histidine 60 is an O2 binding site. Histidine 89 serves as a coordination point for heme b.

The protein belongs to the globin family. As to quaternary structure, heterotetramer of two alpha chains and two beta chains. Red blood cells.

Its function is as follows. Involved in oxygen transport from the lung to the various peripheral tissues. The polypeptide is Hemoglobin subunit alpha (HBA) (Lepidosiren paradoxus (South American lungfish)).